A 112-amino-acid chain; its full sequence is Protein Tat (112 aa).

The interval 1-24 is interaction with human CREBBP; that stretch reads MDPVDPEMPPWHHPGSKPQTPCNN. Positions 1–48 are transactivation; the sequence is MDPVDPEMPPWHHPGSKPQTPCNNCYCKRCCYHCYVCFTKKGLGISHG. Zn(2+) contacts are provided by cysteine 22, cysteine 25, and cysteine 27. Positions 22 to 37 are cysteine-rich; that stretch reads CNNCYCKRCCYHCYVC. Residue lysine 28 is modified to N6-acetyllysine; by host PCAF. Zn(2+)-binding residues include cysteine 30, histidine 33, cysteine 34, and cysteine 37. The core stretch occupies residues 38-48; the sequence is FTKKGLGISHG. The disordered stretch occupies residues 45–112; sequence ISHGRKKRRR…CNSCTRISGQ (68 aa). Positions 49 to 56 match the Nuclear localization signal, RNA-binding (TAR), and protein transduction motif; it reads RKKRRRPA. The segment at 49–82 is interaction with the host capping enzyme RNGTT; sequence RKKRRRPAAAASYPDNKDPVPEQHTGRKQKRQEE. N6-acetyllysine; by host EP300 and GCN5L2 occurs at positions 50 and 51. Residues arginine 52 and arginine 53 each carry the asymmetric dimethylarginine; by host PRMT6 modification. Residues 63 to 91 are compositionally biased toward basic and acidic residues; it reads DNKDPVPEQHTGRKQKRQEEQEKKVEKET. The span at 93–112 shows a compositional bias: polar residues; sequence PSGQPCHQDSCNSCTRISGQ.

Belongs to the lentiviruses Tat family. As to quaternary structure, interacts with host CCNT1. Associates with the P-TEFb complex composed at least of Tat, P-TEFb (CDK9 and CCNT1), TAR RNA, RNA Pol II. Recruits the HATs CREBBP, TAF1/TFIID, EP300, PCAF and GCN5L2. Interacts with host KAT5/Tip60; this interaction targets the latter to degradation. Interacts with the host deacetylase SIRT1. Interacts with host capping enzyme RNGTT; this interaction stimulates RNGTT. Binds to host KDR, and to the host integrins ITGAV/ITGB3 and ITGA5/ITGB1. Interacts with host KPNB1/importin beta-1 without previous binding to KPNA1/importin alpha-1. Interacts with EIF2AK2. Interacts with host nucleosome assembly protein NAP1L1; this interaction may be required for the transport of Tat within the nucleus, since the two proteins interact at the nuclear rim. Interacts with host C1QBP/SF2P32; this interaction involves lysine-acetylated Tat. Interacts with the host chemokine receptors CCR2, CCR3 and CXCR4. Interacts with host DPP4/CD26; this interaction may trigger an anti-proliferative effect. Interacts with host LDLR. Interacts with the host extracellular matrix metalloproteinase MMP1. Interacts with host PRMT6; this interaction mediates Tat's methylation. Interacts with, and is ubiquitinated by MDM2/Hdm2. Interacts with host PSMC3 and HTATIP2. Interacts with STAB1; this interaction may overcome SATB1-mediated repression of IL2 and IL2RA (interleukin) in T cells by binding to the same domain than HDAC1. Interacts (when acetylated) with human CDK13, thereby increasing HIV-1 mRNA splicing and promoting the production of the doubly spliced HIV-1 protein Nef. Interacts with host TBP; this interaction modulates the activity of transcriptional pre-initiation complex. Interacts with host RELA. Interacts with host PLSCR1; this interaction negatively regulates Tat transactivation activity by altering its subcellular distribution. In terms of processing, asymmetrical arginine methylation by host PRMT6 seems to diminish the transactivation capacity of Tat and affects the interaction with host CCNT1. Post-translationally, acetylation by EP300, CREBBP, GCN5L2/GCN5 and PCAF regulates the transactivation activity of Tat. EP300-mediated acetylation of Lys-50 promotes dissociation of Tat from the TAR RNA through the competitive binding to PCAF's bromodomain. In addition, the non-acetylated Tat's N-terminus can also interact with PCAF. PCAF-mediated acetylation of Lys-28 enhances Tat's binding to CCNT1. Lys-50 is deacetylated by SIRT1. Polyubiquitination by host MDM2 does not target Tat to degradation, but activates its transactivation function and fosters interaction with CCNT1 and TAR RNA. In terms of processing, phosphorylated by EIF2AK2 on serine and threonine residues adjacent to the basic region important for TAR RNA binding and function. Phosphorylation of Tat by EIF2AK2 is dependent on the prior activation of EIF2AK2 by dsRNA.

Its subcellular location is the host nucleus. The protein localises to the host nucleolus. It localises to the host cytoplasm. It is found in the secreted. Transcriptional activator that increases RNA Pol II processivity, thereby increasing the level of full-length viral transcripts. Recognizes a hairpin structure at the 5'-LTR of the nascent viral mRNAs referred to as the transactivation responsive RNA element (TAR) and recruits the cyclin T1-CDK9 complex (P-TEFb complex) that will in turn hyperphosphorylate the RNA polymerase II to allow efficient elongation. The CDK9 component of P-TEFb and other Tat-activated kinases hyperphosphorylate the C-terminus of RNA Pol II that becomes stabilized and much more processive. Other factors such as HTATSF1/Tat-SF1, SUPT5H/SPT5, and HTATIP2 are also important for Tat's function. Besides its effect on RNA Pol II processivity, Tat induces chromatin remodeling of proviral genes by recruiting the histone acetyltransferases (HATs) CREBBP, EP300 and PCAF to the chromatin. This also contributes to the increase in proviral transcription rate, especially when the provirus integrates in transcriptionally silent region of the host genome. To ensure maximal activation of the LTR, Tat mediates nuclear translocation of NF-kappa-B by interacting with host RELA. Through its interaction with host TBP, Tat may also modulate transcription initiation. Tat can reactivate a latently infected cell by penetrating in it and transactivating its LTR promoter. In the cytoplasm, Tat is thought to act as a translational activator of HIV-1 mRNAs. Its function is as follows. Extracellular circulating Tat can be endocytosed by surrounding uninfected cells via the binding to several surface receptors such as CD26, CXCR4, heparan sulfate proteoglycans (HSPG) or LDLR. Neurons are rarely infected, but they internalize Tat via their LDLR. Through its interaction with nuclear HATs, Tat is potentially able to control the acetylation-dependent cellular gene expression. Modulates the expression of many cellular genes involved in cell survival, proliferation or in coding for cytokines or cytokine receptors. Tat plays a role in T-cell and neurons apoptosis. Tat induced neurotoxicity and apoptosis probably contribute to neuroAIDS. Circulating Tat also acts as a chemokine-like and/or growth factor-like molecule that binds to specific receptors on the surface of the cells, affecting many cellular pathways. In the vascular system, Tat binds to ITGAV/ITGB3 and ITGA5/ITGB1 integrins dimers at the surface of endothelial cells and competes with bFGF for heparin-binding sites, leading to an excess of soluble bFGF. In Homo sapiens (Human), this protein is Protein Tat.